A 564-amino-acid polypeptide reads, in one-letter code: Adenine deaminase (564 aa).

It belongs to the metallo-dependent hydrolases superfamily. Adenine deaminase family. The cofactor is Mn(2+).

It carries out the reaction adenine + H2O + H(+) = hypoxanthine + NH4(+). In Methylobacterium sp. (strain 4-46), this protein is Adenine deaminase.